A 331-amino-acid polypeptide reads, in one-letter code: GTPase Obg (331 aa).

The 159-residue stretch at 1–159 folds into the Obg domain; the sequence is MHFIDEVKIY…MWIHLRLKLL (159 aa). Positions 160-327 constitute an OBG-type G domain; the sequence is SDVGLIGLPN…IVKLALEIIK (168 aa). GTP-binding positions include 166–173, 191–195, 212–215, 279–282, and 308–310; these read GLPNAGKS, FTTLV, DIPG, NKCD, and STY. 2 residues coordinate Mg(2+): Ser-173 and Thr-193.

It belongs to the TRAFAC class OBG-HflX-like GTPase superfamily. OBG GTPase family. As to quaternary structure, monomer. It depends on Mg(2+) as a cofactor.

The protein localises to the cytoplasm. In terms of biological role, an essential GTPase which binds GTP, GDP and possibly (p)ppGpp with moderate affinity, with high nucleotide exchange rates and a fairly low GTP hydrolysis rate. Plays a role in control of the cell cycle, stress response, ribosome biogenesis and in those bacteria that undergo differentiation, in morphogenesis control. This Rickettsia prowazekii (strain Madrid E) protein is GTPase Obg.